Here is a 168-residue protein sequence, read N- to C-terminus: Peptidoglycan-associated lipoprotein (168 aa).

Positions 1–24 (MGRIAALTRNPVMIALVAMLAIAG) are cleaved as a signal peptide. A lipid anchor (N-palmitoyl cysteine) is attached at cysteine 25. The S-diacylglycerol cysteine moiety is linked to residue cysteine 25. Residues 50-167 (AQDFTVNIGD…RAVTTLSGAG (118 aa)) enclose the OmpA-like domain.

The protein belongs to the Pal lipoprotein family. As to quaternary structure, the Tol-Pal system is composed of five core proteins: the inner membrane proteins TolA, TolQ and TolR, the periplasmic protein TolB and the outer membrane protein Pal. They form a network linking the inner and outer membranes and the peptidoglycan layer.

It is found in the cell outer membrane. Its function is as follows. Part of the Tol-Pal system, which plays a role in outer membrane invagination during cell division and is important for maintaining outer membrane integrity. The protein is Peptidoglycan-associated lipoprotein of Mesorhizobium japonicum (strain LMG 29417 / CECT 9101 / MAFF 303099) (Mesorhizobium loti (strain MAFF 303099)).